Here is a 1014-residue protein sequence, read N- to C-terminus: Protein argonaute 2 (1014 aa).

A compositionally biased stretch (basic and acidic residues) spans 1-15; the sequence is MERGGYRGGRGDGRG. A disordered region spans residues 1–137; it reads MERGGYRGGR…PSTSTTVVSE (137 aa). Gly residues-rich tracts occupy residues 18 to 29 and 49 to 58; these read GRGYGGGGGGGE and RGGGNRGQGR. A compositionally biased stretch (low complexity) spans 83–104; it reads QFQQPRPQVAPQPSQAPASYAG. Over residues 105-114 the composition is skewed to gly residues; that stretch reads SVGGVAGRGA. Over residues 121–137 the composition is skewed to low complexity; it reads VPSDSASPSTSTTVVSE. One can recognise a PAZ domain in the interval 369–482; it reads SVIEYLKLYF…VPMEFCDLVE (114 aa). In terms of domain architecture, Piwi spans 666 to 965; the sequence is LVLCAMSRKD…VAFRGRMYHE (300 aa). 3 interaction with guide RNA regions span residues 857–858, 900–908, and 937–959; these read KR, HHGGIGTSK, and FTRCTKPVSLVPPVYYADMVAFR.

It belongs to the argonaute family. Ago subfamily. As to quaternary structure, interacts with NERD.

Functionally, involved in RNA-mediated post-transcriptional gene silencing (PTGS). Main component of the RNA-induced silencing complex (RISC) that binds to a short guide RNA such as microRNA (miRNA) or small interfering RNA (siRNA). RISC uses the mature miRNA or siRNA as a guide for slicer-directed cleavage of homologous mRNAs to repress gene expression. Associates mainly with siRNAs of 21 nucleotide in length and preferentially recruits small RNAs with a 5' terminal adenosine. Probably involved in antiviral RNA silencing. Associates with siRNA derived from cucumber mosaic virus (CMV). Targeted by turnip yellows virus (TuYV) protein P0 (via F-box-like domain) for probable proteasome degradation and thereby inactivating AGO2 function in RNA silencing. Required to direct NERD-dependent DNA methylation and silencing. The sequence is that of Protein argonaute 2 (AGO2) from Arabidopsis thaliana (Mouse-ear cress).